The sequence spans 105 residues: Probable tetrachloroethene reductive dehalogenase membrane anchor protein (105 aa).

3 helical membrane passes run 3–23 (IYDV…QYGI), 35–55 (IPLQ…LAWG), and 66–86 (AIGM…IITY).

The protein belongs to the PceB family.

The protein localises to the cell membrane. May act as a membrane anchor for the tetrachloroethene reductive dehalogenase PceA. This is Probable tetrachloroethene reductive dehalogenase membrane anchor protein from Desulfitobacterium hafniense (Desulfitobacterium frappieri).